A 937-amino-acid polypeptide reads, in one-letter code: Isoleucine--tRNA ligase (937 aa).

The short motif at 57 to 67 is the 'HIGH' region element; the sequence is PYANGPIHMGH. Glu556 contacts L-isoleucyl-5'-AMP. The 'KMSKS' region signature appears at 597 to 601; sequence KMSKS. Lys600 contacts ATP. 4 residues coordinate Zn(2+): Cys895, Cys898, Cys915, and Cys918.

The protein belongs to the class-I aminoacyl-tRNA synthetase family. IleS type 1 subfamily. In terms of assembly, monomer. Zn(2+) serves as cofactor.

Its subcellular location is the cytoplasm. It carries out the reaction tRNA(Ile) + L-isoleucine + ATP = L-isoleucyl-tRNA(Ile) + AMP + diphosphate. Functionally, catalyzes the attachment of isoleucine to tRNA(Ile). As IleRS can inadvertently accommodate and process structurally similar amino acids such as valine, to avoid such errors it has two additional distinct tRNA(Ile)-dependent editing activities. One activity is designated as 'pretransfer' editing and involves the hydrolysis of activated Val-AMP. The other activity is designated 'posttransfer' editing and involves deacylation of mischarged Val-tRNA(Ile). This Levilactobacillus brevis (strain ATCC 367 / BCRC 12310 / CIP 105137 / JCM 1170 / LMG 11437 / NCIMB 947 / NCTC 947) (Lactobacillus brevis) protein is Isoleucine--tRNA ligase.